We begin with the raw amino-acid sequence, 62 residues long: U8-theraphotoxin-Cg1a 1 (62 aa).

The first 21 residues, 1–21 (MKTLVLFIIFGLAALFLLSSA), serve as a signal peptide directing secretion. The propeptide occupies 22 to 29 (NELEETER). Disulfide bonds link cysteine 31–cysteine 46, cysteine 38–cysteine 51, and cysteine 45–cysteine 58.

The protein belongs to the neurotoxin 10 (Hwtx-1) family. 30 (Jztx-14) subfamily. As to expression, expressed by the venom gland.

The protein localises to the secreted. Its function is as follows. Probable ion channel inhibitor. The sequence is that of U8-theraphotoxin-Cg1a 1 from Chilobrachys guangxiensis (Chinese earth tiger tarantula).